We begin with the raw amino-acid sequence, 339 residues long: Exopolyphosphatase 1 (339 aa).

The interval glutamine 315–threonine 339 is disordered. Over residues arginine 319–threonine 339 the composition is skewed to basic and acidic residues.

This sequence belongs to the GppA/Ppx family. As to quaternary structure, homodimer.

It catalyses the reaction [phosphate](n) + H2O = [phosphate](n-1) + phosphate + H(+). Functionally, degradation of inorganic polyphosphates (polyP). Releases orthophosphate processively from the ends of the polyP chain. This is Exopolyphosphatase 1 from Mycobacterium leprae (strain TN).